A 284-amino-acid polypeptide reads, in one-letter code: Pantothenate synthetase (284 aa).

Position 30–37 (30–37 (MGNLHNAH)) interacts with ATP. The active-site Proton donor is the His37. Gln61 is a (R)-pantoate binding site. A beta-alanine-binding site is contributed by Gln61. 149 to 152 (GIKD) is a binding site for ATP. Position 155 (Gln155) interacts with (R)-pantoate. ATP contacts are provided by residues Val178 and 186 to 189 (MSSR).

Belongs to the pantothenate synthetase family. Homodimer.

The protein localises to the cytoplasm. It carries out the reaction (R)-pantoate + beta-alanine + ATP = (R)-pantothenate + AMP + diphosphate + H(+). Its pathway is cofactor biosynthesis; (R)-pantothenate biosynthesis; (R)-pantothenate from (R)-pantoate and beta-alanine: step 1/1. Functionally, catalyzes the condensation of pantoate with beta-alanine in an ATP-dependent reaction via a pantoyl-adenylate intermediate. The sequence is that of Pantothenate synthetase from Saccharophagus degradans (strain 2-40 / ATCC 43961 / DSM 17024).